The primary structure comprises 268 residues: Tryptophan synthase alpha chain (268 aa).

Catalysis depends on proton acceptor residues Glu-49 and Asp-60.

This sequence belongs to the TrpA family. As to quaternary structure, tetramer of two alpha and two beta chains.

It catalyses the reaction (1S,2R)-1-C-(indol-3-yl)glycerol 3-phosphate + L-serine = D-glyceraldehyde 3-phosphate + L-tryptophan + H2O. Its pathway is amino-acid biosynthesis; L-tryptophan biosynthesis; L-tryptophan from chorismate: step 5/5. Functionally, the alpha subunit is responsible for the aldol cleavage of indoleglycerol phosphate to indole and glyceraldehyde 3-phosphate. The sequence is that of Tryptophan synthase alpha chain from Aliivibrio fischeri (strain ATCC 700601 / ES114) (Vibrio fischeri).